Consider the following 143-residue polypeptide: Large ribosomal subunit protein uL15 (143 aa).

The segment at 1–52 (MKLNTLAPAAGSKSAPKRLGRGIGSGLGKTSGKGHKGQKARSGGYHKVGFEG) is disordered. A compositionally biased stretch (gly residues) spans 21 to 31 (RGIGSGLGKTS).

The protein belongs to the universal ribosomal protein uL15 family. Part of the 50S ribosomal subunit.

Binds to the 23S rRNA. This Francisella tularensis subsp. holarctica (strain FTNF002-00 / FTA) protein is Large ribosomal subunit protein uL15.